Consider the following 543-residue polypeptide: Chaperonin GroEL (543 aa).

ATP contacts are provided by residues 29–32 (TLGP), K50, 86–90 (DGTTT), G413, 480–482 (NAA), and D496. A disordered region spans residues 524-543 (EKPEKKESTPASAGAGDMDF).

This sequence belongs to the chaperonin (HSP60) family. In terms of assembly, forms a cylinder of 14 subunits composed of two heptameric rings stacked back-to-back. Interacts with the co-chaperonin GroES.

It is found in the cytoplasm. The enzyme catalyses ATP + H2O + a folded polypeptide = ADP + phosphate + an unfolded polypeptide.. Together with its co-chaperonin GroES, plays an essential role in assisting protein folding. The GroEL-GroES system forms a nano-cage that allows encapsulation of the non-native substrate proteins and provides a physical environment optimized to promote and accelerate protein folding. This chain is Chaperonin GroEL, found in Thermus thermophilus (strain ATCC BAA-163 / DSM 7039 / HB27).